The primary structure comprises 240 residues: Uridylate kinase (240 aa).

Position 12–15 (12–15 (KLSG)) interacts with ATP. The involved in allosteric activation by GTP stretch occupies residues 20-25 (GKQGFG). Gly54 provides a ligand contact to UMP. ATP contacts are provided by Gly55 and Arg59. UMP contacts are provided by residues Asp74 and 135 to 142 (TGNPYFST). ATP is bound by residues Asn163, Tyr169, and Asp172.

Belongs to the UMP kinase family. As to quaternary structure, homohexamer.

The protein resides in the cytoplasm. It catalyses the reaction UMP + ATP = UDP + ADP. Its pathway is pyrimidine metabolism; CTP biosynthesis via de novo pathway; UDP from UMP (UMPK route): step 1/1. With respect to regulation, allosterically activated by GTP. Inhibited by UTP. Catalyzes the reversible phosphorylation of UMP to UDP. The sequence is that of Uridylate kinase from Geobacillus kaustophilus (strain HTA426).